Consider the following 408-residue polypeptide: Aspartate aminotransferase (408 aa).

L-aspartate contacts are provided by glycine 45, tryptophan 134, and asparagine 184. Position 247 is an N6-(pyridoxal phosphate)lysine (lysine 247). Arginine 382 contributes to the L-aspartate binding site.

The protein belongs to the class-I pyridoxal-phosphate-dependent aminotransferase family. As to quaternary structure, homodimer. It depends on pyridoxal 5'-phosphate as a cofactor.

Its subcellular location is the cytoplasm. The enzyme catalyses L-aspartate + 2-oxoglutarate = oxaloacetate + L-glutamate. Functionally, catalyzes the reversible conversion of aspartate and 2-oxoglutarate to glutamate and oxaloacetate. Does not have prephenate aminotransferase activity. The polypeptide is Aspartate aminotransferase (Streptomyces avermitilis (strain ATCC 31267 / DSM 46492 / JCM 5070 / NBRC 14893 / NCIMB 12804 / NRRL 8165 / MA-4680)).